Reading from the N-terminus, the 690-residue chain is Elongation factor G (690 aa).

Residues 8 to 283 form the tr-type G domain; the sequence is DKYRNIGIMA…AVVDFLPSPL (276 aa). GTP-binding positions include 17–24, 81–85, and 135–138; these read AHIDAGKT, DTPGH, and NKLD.

It belongs to the TRAFAC class translation factor GTPase superfamily. Classic translation factor GTPase family. EF-G/EF-2 subfamily.

It localises to the cytoplasm. Its function is as follows. Catalyzes the GTP-dependent ribosomal translocation step during translation elongation. During this step, the ribosome changes from the pre-translocational (PRE) to the post-translocational (POST) state as the newly formed A-site-bound peptidyl-tRNA and P-site-bound deacylated tRNA move to the P and E sites, respectively. Catalyzes the coordinated movement of the two tRNA molecules, the mRNA and conformational changes in the ribosome. In Zymomonas mobilis subsp. mobilis (strain ATCC 31821 / ZM4 / CP4), this protein is Elongation factor G.